We begin with the raw amino-acid sequence, 102 residues long: Protein translation factor SUI1 homolog (102 aa).

The protein belongs to the SUI1 family.

In Methanococcus vannielii, this protein is Protein translation factor SUI1 homolog.